The following is a 240-amino-acid chain: MRIERVDDTTVKLFITYSDIEARGFSREDLWTNRKRGEEFFWSMMDEINEEEDFVVEGPLWIQVHAFEKGVEVTISKSKNEEAMNMSDEDANEQFEEQVNELLANTLENEESIEDLFEQRAQQQKHSHKSEQKQTKQRPNIRTVIVKFDDLEQVISYAYHHNLSTDEFEDLLYMNDNKYYYAIHFDESVSQEMINDSYSQMLEFAYPTDKTEVYLNDYAKIIMSHNVTAQVRRYFPDTVE.

Residues 118–138 are disordered; that stretch reads EQRAQQQKHSHKSEQKQTKQR.

It belongs to the MecA family. As to quaternary structure, homodimer.

Its function is as follows. Enables the recognition and targeting of unfolded and aggregated proteins to the ClpC protease or to other proteins involved in proteolysis. This Staphylococcus haemolyticus (strain JCSC1435) protein is Adapter protein MecA.